The following is a 392-amino-acid chain: NAC domain-containing protein 58 (392 aa).

One can recognise an NAC domain in the interval 9-173 (LPPGFRFHPT…DWVLCRIYKK (165 aa)). Positions 317–345 (STSAGAVVEPPAVTGKRKRSSDGGEPTIQ) are disordered.

In terms of tissue distribution, expressed in leaves, nodes, internodes and mature seeds. Highly expressed in roots. Expressed in leaf sheaths, flag leaves and inflorescences. Expressed in primary and lateral roots, particularly in the vascular tissues. Expressed in the primary phloem of the culm and leaf sheaths. Expressed principally in the primary phloem and in the peripheral zone of the leaf vascular bundles. Expressed in the floral tissues.

It localises to the nucleus. In terms of biological role, transcription factor that acts as a positive regulator of the jasmonate (JA) pathway to mediate leaf senescence. May directly regulate LOX2, AOC, AOS2, AOC1 and OPR7, which are genes involved in the biosynthesis of JA. Regulates positively leaf senescence by directly targeting senescence-associated genes (SAGs) related to chlorophyll degradation, nutrient transport and other genes associated with abscisic acid-induced leaf senescence. Transcription activator that plays a role in mediating abiotic stress responses through the abscisic acid (ABA) pathway. Possesses transcriptional activator activity in yeast. The polypeptide is NAC domain-containing protein 58 (Oryza sativa subsp. japonica (Rice)).